The sequence spans 400 residues: Enoyl-[acyl-carrier-protein] reductase [NADH] (400 aa).

Residues 48 to 53, 74 to 75, 111 to 112, and 139 to 140 contribute to the NAD(+) site; these read GSSSGY, FE, DA, and LA. Position 225 (tyrosine 225) interacts with substrate. Tyrosine 235 functions as the Proton donor in the catalytic mechanism. NAD(+) contacts are provided by residues lysine 244 and 273 to 275; that span reads VVT.

It belongs to the TER reductase family. Monomer.

It catalyses the reaction a 2,3-saturated acyl-[ACP] + NAD(+) = a (2E)-enoyl-[ACP] + NADH + H(+). Its pathway is lipid metabolism; fatty acid biosynthesis. Its function is as follows. Involved in the final reduction of the elongation cycle of fatty acid synthesis (FAS II). Catalyzes the reduction of a carbon-carbon double bond in an enoyl moiety that is covalently linked to an acyl carrier protein (ACP). The protein is Enoyl-[acyl-carrier-protein] reductase [NADH] of Shewanella oneidensis (strain ATCC 700550 / JCM 31522 / CIP 106686 / LMG 19005 / NCIMB 14063 / MR-1).